Consider the following 99-residue polypeptide: MTEQHETIQSVTDGIYNNLVTSMIHSIVSKETAREKLLRSRYGSYKQYHYDPNSQLDIHGNPKQQDSSQYFYCENCGREVSGNRFAAHLQRCLTRGSRR.

The segment at 71 to 92 (FYCENCGREVSGNRFAAHLQRC) adopts an SGF11-type zinc-finger fold.

The protein belongs to the SGF11 family. Component of the 1.8 MDa SAGA transcription coactivator-HAT complex. SAGA is built of 5 distinct domains with specialized functions. Within the SAGA complex, SUS1, SGF11, SGF73 and UBP8 form an additional subcomplex of SAGA called the DUB module (deubiquitination module). Interacts directly with SGF73, SUS1 and UBP8.

It is found in the nucleus. Functions as a component of the transcription regulatory histone acetylation (HAT) complex SAGA. At the promoters, SAGA is required for recruitment of the basal transcription machinery. It influences RNA polymerase II transcriptional activity through different activities such as TBP interaction and promoter selectivity, interaction with transcription activators, and chromatin modification through histone acetylation and deubiquitination. SAGA acetylates nucleosomal histone H3 to some extent (to form H3K9ac, H3K14ac, H3K18ac and H3K23ac). SAGA interacts with DNA via upstream activating sequences (UASs). Involved in transcriptional regulation of a subset of SAGA-regulated genes. Within the SAGA complex, participates in a subcomplex, that specifically deubiquitinates histones H2B. This is SAGA-associated factor 11 from Candida glabrata (strain ATCC 2001 / BCRC 20586 / JCM 3761 / NBRC 0622 / NRRL Y-65 / CBS 138) (Yeast).